A 383-amino-acid chain; its full sequence is Sterol 24-C-methyltransferase ERG6 (383 aa).

Ser-2 bears the N-acetylserine mark. Phosphoserine is present on Ser-99.

It belongs to the class I-like SAM-binding methyltransferase superfamily. Erg6/SMT family. Interacts with ERG28.

The protein resides in the microsome. It is found in the mitochondrion. The enzyme catalyses zymosterol + S-adenosyl-L-methionine = fecosterol + S-adenosyl-L-homocysteine + H(+). Its pathway is steroid metabolism; ergosterol biosynthesis; ergosterol from zymosterol: step 1/5. Its function is as follows. Sterol 24-C-methyltransferase; part of the third module of ergosterol biosynthesis pathway that includes the late steps of the pathway. ERG6 catalyzes the methyl transfer from S-adenosyl-methionine to the C-24 of zymosterol to form fecosterol. The third module or late pathway involves the ergosterol synthesis itself through consecutive reactions that mainly occur in the endoplasmic reticulum (ER) membrane. Firstly, the squalene synthase ERG9 catalyzes the condensation of 2 farnesyl pyrophosphate moieties to form squalene, which is the precursor of all steroids. Squalene synthase is crucial for balancing the incorporation of farnesyl diphosphate (FPP) into sterol and nonsterol isoprene synthesis. Secondly, the squalene epoxidase ERG1 catalyzes the stereospecific oxidation of squalene to (S)-2,3-epoxysqualene, which is considered to be a rate-limiting enzyme in steroid biosynthesis. Then, the lanosterol synthase ERG7 catalyzes the cyclization of (S)-2,3 oxidosqualene to lanosterol, a reaction that forms the sterol core. In the next steps, lanosterol is transformed to zymosterol through a complex process involving various demethylation, reduction and desaturation reactions. The lanosterol 14-alpha-demethylase ERG11 (also known as CYP51) catalyzes C14-demethylation of lanosterol to produce 4,4'-dimethyl cholesta-8,14,24-triene-3-beta-ol, which is critical for ergosterol biosynthesis. The C-14 reductase ERG24 reduces the C14=C15 double bond of 4,4-dimethyl-cholesta-8,14,24-trienol to produce 4,4-dimethyl-cholesta-8,24-dienol. 4,4-dimethyl-cholesta-8,24-dienol is substrate of the C-4 demethylation complex ERG25-ERG26-ERG27 in which ERG25 catalyzes the three-step monooxygenation required for the demethylation of 4,4-dimethyl and 4alpha-methylsterols, ERG26 catalyzes the oxidative decarboxylation that results in a reduction of the 3-beta-hydroxy group at the C-3 carbon to an oxo group, and ERG27 is responsible for the reduction of the keto group on the C-3. ERG28 has a role as a scaffold to help anchor ERG25, ERG26 and ERG27 to the endoplasmic reticulum and ERG29 regulates the activity of the iron-containing C4-methylsterol oxidase ERG25. Then, the sterol 24-C-methyltransferase ERG6 catalyzes the methyl transfer from S-adenosyl-methionine to the C-24 of zymosterol to form fecosterol. The C-8 sterol isomerase ERG2 catalyzes the reaction which results in unsaturation at C-7 in the B ring of sterols and thus converts fecosterol to episterol. The sterol-C5-desaturase ERG3 then catalyzes the introduction of a C-5 double bond in the B ring to produce 5-dehydroepisterol. The C-22 sterol desaturase ERG5 further converts 5-dehydroepisterol into ergosta-5,7,22,24(28)-tetraen-3beta-ol by forming the C-22(23) double bond in the sterol side chain. Finally, ergosta-5,7,22,24(28)-tetraen-3beta-ol is substrate of the C-24(28) sterol reductase ERG4 to produce ergosterol. This Saccharomyces cerevisiae (strain ATCC 204508 / S288c) (Baker's yeast) protein is Sterol 24-C-methyltransferase ERG6.